The chain runs to 212 residues: Ribonuclease HII (212 aa).

The RNase H type-2 domain occupies 1-204; the sequence is MRVGIDEAGR…LRSTAPLYYI (204 aa). Asp-6, Glu-7, and Asp-103 together coordinate a divalent metal cation.

It belongs to the RNase HII family. Mn(2+) is required as a cofactor. The cofactor is Mg(2+).

It localises to the cytoplasm. The catalysed reaction is Endonucleolytic cleavage to 5'-phosphomonoester.. Endonuclease that specifically degrades the RNA of RNA-DNA hybrids. The protein is Ribonuclease HII of Saccharolobus solfataricus (strain ATCC 35092 / DSM 1617 / JCM 11322 / P2) (Sulfolobus solfataricus).